The primary structure comprises 669 residues: L-type lectin-domain containing receptor kinase IV.4 (669 aa).

Residues 1-23 (MFFIKLFTIFFLSFFWQSLKSSS) form the signal peptide. Topologically, residues 24–294 (QIIDFTYNGF…TRVYRFYKNW (271 aa)) are extracellular. A legume-lectin like region spans residues 26 to 260 (IDFTYNGFRP…SEIFVLGWSF (235 aa)). Residues Asn-58, Asn-80, Asn-127, Asn-152, and Asn-185 are each glycosylated (N-linked (GlcNAc...) asparagine). Residues 295–315 (VPLISLLLIPFLLIIFLVRFI) form a helical membrane-spanning segment. Topologically, residues 316-669 (MKRRRKFAEE…VAYSLLSSGR (354 aa)) are cytoplasmic. The Protein kinase domain occupies 350 to 627 (FKDKNILGSG…LQYLRGDAML (278 aa)). Residues 356 to 364 (LGSGGFGSV) and Lys-379 each bind ATP. The active-site Proton acceptor is the Asp-475.

The protein in the C-terminal section; belongs to the protein kinase superfamily. Ser/Thr protein kinase family. This sequence in the N-terminal section; belongs to the leguminous lectin family.

The protein localises to the cell membrane. The catalysed reaction is L-seryl-[protein] + ATP = O-phospho-L-seryl-[protein] + ADP + H(+). It catalyses the reaction L-threonyl-[protein] + ATP = O-phospho-L-threonyl-[protein] + ADP + H(+). Its function is as follows. Involved in resistance response to the pathogenic oomycetes Phytophthora infestans and Phytophthora capsici and to the pathogenic bacteria Pseudomonas syringae. This is L-type lectin-domain containing receptor kinase IV.4 from Arabidopsis thaliana (Mouse-ear cress).